The sequence spans 96 residues: Defensin-like protein 151 (96 aa).

The signal sequence occupies residues 1–29 (MKKPSQLSATILTIFVILAIGVMVKETLG). 4 cysteine pairs are disulfide-bonded: Cys35–Cys88, Cys48–Cys68, Cys53–Cys82, and Cys57–Cys84.

This sequence belongs to the DEFL family.

The protein localises to the secreted. This is Defensin-like protein 151 (LCR17) from Arabidopsis thaliana (Mouse-ear cress).